The following is a 278-amino-acid chain: 3-methyl-2-oxobutanoate hydroxymethyltransferase (278 aa).

Asp43 and Asp82 together coordinate Mg(2+). Residues 43 to 44 (DS), Asp82, and Lys112 contribute to the 3-methyl-2-oxobutanoate site. Glu114 contributes to the Mg(2+) binding site. The active-site Proton acceptor is Glu181.

It belongs to the PanB family. As to quaternary structure, homodecamer; pentamer of dimers. Requires Mg(2+) as cofactor.

Its subcellular location is the cytoplasm. It carries out the reaction 3-methyl-2-oxobutanoate + (6R)-5,10-methylene-5,6,7,8-tetrahydrofolate + H2O = 2-dehydropantoate + (6S)-5,6,7,8-tetrahydrofolate. It functions in the pathway cofactor biosynthesis; (R)-pantothenate biosynthesis; (R)-pantoate from 3-methyl-2-oxobutanoate: step 1/2. Its function is as follows. Catalyzes the reversible reaction in which hydroxymethyl group from 5,10-methylenetetrahydrofolate is transferred onto alpha-ketoisovalerate to form ketopantoate. The protein is 3-methyl-2-oxobutanoate hydroxymethyltransferase of Bacillus cereus (strain B4264).